A 131-amino-acid polypeptide reads, in one-letter code: Small ribosomal subunit protein uS8 (131 aa).

The protein belongs to the universal ribosomal protein uS8 family. As to quaternary structure, part of the 30S ribosomal subunit. Contacts proteins S5 and S12.

In terms of biological role, one of the primary rRNA binding proteins, it binds directly to 16S rRNA central domain where it helps coordinate assembly of the platform of the 30S subunit. The chain is Small ribosomal subunit protein uS8 from Dehalococcoides mccartyi (strain CBDB1).